The following is a 352-amino-acid chain: Maleylacetate reductase (352 aa).

Belongs to the iron-containing alcohol dehydrogenase family.

It carries out the reaction 3-oxoadipate + NAD(+) = maleylacetate + NADH + H(+). The enzyme catalyses 3-oxoadipate + NADP(+) = maleylacetate + NADPH + H(+). It functions in the pathway aromatic compound metabolism; 3-chlorocatechol degradation. The chain is Maleylacetate reductase (tcbF) from Pseudomonas sp. (strain P51).